Here is a 545-residue protein sequence, read N- to C-terminus: Sphingosine-1-phosphate lyase (545 aa).

The Lumenal portion of the chain corresponds to 1 to 26; it reads MRPFSGSDCLKPVTEGINRAFGAKEP. The helical; Signal-anchor for type III membrane protein transmembrane segment at 27 to 47 threads the bilayer; it reads WQVATITATTVLGGVWLWTVI. Topologically, residues 48–545 are cytoplasmic; that stretch reads CQDENLYIRG…HSMYYTPSQK (498 aa). Lys-342 carries the N6-(pyridoxal phosphate)lysine modification.

This sequence belongs to the group II decarboxylase family. Sphingosine-1-phosphate lyase subfamily. Pyridoxal 5'-phosphate is required as a cofactor. As to expression, localized to the developing gut primordium during embryogenesis.

The protein resides in the endoplasmic reticulum membrane. It catalyses the reaction sphinganine 1-phosphate = hexadecanal + phosphoethanolamine. It participates in lipid metabolism; sphingolipid metabolism. In terms of biological role, cleaves phosphorylated sphingoid bases (PSBs), such as sphingosine-1-phosphate, into fatty aldehydes and phosphoethanolamine. Sphingolipid catabolism is required for normal development including viability, reproduction and muscle development. In Drosophila melanogaster (Fruit fly), this protein is Sphingosine-1-phosphate lyase.